The chain runs to 443 residues: Xaa-Pro dipeptidase (443 aa).

The Mn(2+) site is built by Asp244, Asp255, His336, Glu381, and Glu420.

It belongs to the peptidase M24B family. Bacterial-type prolidase subfamily. The cofactor is Mn(2+).

It carries out the reaction Xaa-L-Pro dipeptide + H2O = an L-alpha-amino acid + L-proline. Splits dipeptides with a prolyl residue in the C-terminal position. The polypeptide is Xaa-Pro dipeptidase (Stenotrophomonas maltophilia (strain K279a)).